The primary structure comprises 465 residues: Ribulose bisphosphate carboxylase large chain (465 aa).

N6,N6,N6-trimethyllysine is present on Lys-4. Asn-113 and Thr-163 together coordinate substrate. Lys-165 (proton acceptor) is an active-site residue. Lys-167 serves as a coordination point for substrate. Mg(2+)-binding residues include Lys-191, Asp-193, and Glu-194. Lys-191 carries the post-translational modification N6-carboxylysine. The active-site Proton acceptor is the His-284. The substrate site is built by Arg-285, His-317, and Ser-369.

The protein belongs to the RuBisCO large chain family. Type I subfamily. Heterohexadecamer of 8 large chains and 8 small chains; disulfide-linked. The disulfide link is formed within the large subunit homodimers. Mg(2+) is required as a cofactor. Post-translationally, the disulfide bond which can form in the large chain dimeric partners within the hexadecamer appears to be associated with oxidative stress and protein turnover.

The protein resides in the plastid. Its subcellular location is the chloroplast. It catalyses the reaction 2 (2R)-3-phosphoglycerate + 2 H(+) = D-ribulose 1,5-bisphosphate + CO2 + H2O. The enzyme catalyses D-ribulose 1,5-bisphosphate + O2 = 2-phosphoglycolate + (2R)-3-phosphoglycerate + 2 H(+). Functionally, ruBisCO catalyzes two reactions: the carboxylation of D-ribulose 1,5-bisphosphate, the primary event in carbon dioxide fixation, as well as the oxidative fragmentation of the pentose substrate in the photorespiration process. Both reactions occur simultaneously and in competition at the same active site. In Hamamelis mollis (Chinese witch hazel), this protein is Ribulose bisphosphate carboxylase large chain.